A 134-amino-acid polypeptide reads, in one-letter code: Small ribosomal subunit protein uS8 (134 aa).

It belongs to the universal ribosomal protein uS8 family. As to quaternary structure, part of the 30S ribosomal subunit. Contacts proteins S5 and S12.

One of the primary rRNA binding proteins, it binds directly to 16S rRNA central domain where it helps coordinate assembly of the platform of the 30S subunit. In Sphingopyxis alaskensis (strain DSM 13593 / LMG 18877 / RB2256) (Sphingomonas alaskensis), this protein is Small ribosomal subunit protein uS8.